A 351-amino-acid polypeptide reads, in one-letter code: Dihydroorotate dehydrogenase (quinone) (351 aa).

FMN-binding positions include 61-65 (AGLDK) and Thr85. Lys65 provides a ligand contact to substrate. 110-114 (NRMGF) is a substrate binding site. The FMN site is built by Asn139 and Asn172. Residue Asn172 participates in substrate binding. The Nucleophile role is filled by Ser175. Asn177 serves as a coordination point for substrate. Residues Lys217 and Thr245 each coordinate FMN. 246 to 247 (NT) contacts substrate. FMN contacts are provided by residues Gly268, Gly297, and 318 to 319 (YT).

This sequence belongs to the dihydroorotate dehydrogenase family. Type 2 subfamily. In terms of assembly, monomer. Requires FMN as cofactor.

The protein localises to the cell membrane. The catalysed reaction is (S)-dihydroorotate + a quinone = orotate + a quinol. The protein operates within pyrimidine metabolism; UMP biosynthesis via de novo pathway; orotate from (S)-dihydroorotate (quinone route): step 1/1. Catalyzes the conversion of dihydroorotate to orotate with quinone as electron acceptor. The chain is Dihydroorotate dehydrogenase (quinone) from Xylella fastidiosa (strain 9a5c).